A 191-amino-acid polypeptide reads, in one-letter code: Thymidine kinase (191 aa).

Residues 15 to 22 and 88 to 91 each bind ATP; these read GPMYSGKT and DEAQ. The Proton acceptor role is filled by glutamate 89. Residues cysteine 145, cysteine 148, cysteine 183, and cysteine 186 each contribute to the Zn(2+) site.

The protein belongs to the thymidine kinase family. Homotetramer.

The protein resides in the cytoplasm. The enzyme catalyses thymidine + ATP = dTMP + ADP + H(+). This is Thymidine kinase from Clostridium botulinum (strain Kyoto / Type A2).